A 415-amino-acid chain; its full sequence is E3 ubiquitin-protein ligase RNF135 (415 aa).

The RING-type zinc finger occupies 21 to 67 (CIICQGLLDWPTTLPCGHSFCLQCLKDLWVSKRAGVDSCPWACPICR). The stretch at 181-206 (TFSASQKKIQEILRDLEKIQETLQGS) forms a coiled coil. The region spanning 228 to 415 (PDQRYPVSRK…LTPGNYLEIL (188 aa)) is the B30.2/SPRY domain.

Homodimer. Interacts (homodimer) with RIGI (double-stranded RNA-bound oligomeric form); involved in both RIGI ubiquitination, oligomerization into filaments associated with viral RNAs and the bridging of these filaments. Interacts with UBE2D3 and UBE2N; E2 ubiquitin ligases involved in RNF135-mediated ubiquitination of RIGI and activation of the RIG-I signaling pathway. Interacts with PCBP2.

It is found in the cytoplasm. The protein resides in the stress granule. The enzyme catalyses S-ubiquitinyl-[E2 ubiquitin-conjugating enzyme]-L-cysteine + [acceptor protein]-L-lysine = [E2 ubiquitin-conjugating enzyme]-L-cysteine + N(6)-ubiquitinyl-[acceptor protein]-L-lysine.. Its pathway is protein modification; protein ubiquitination. In terms of biological role, E2-dependent E3 ubiquitin-protein ligase that functions as a RIGI coreceptor in the sensing of viral RNAs in cell cytoplasm and the activation of the antiviral innate immune response. Together with the UBE2D3, UBE2N and UB2V1 E2 ligases, catalyzes the 'Lys-63'-linked polyubiquitination of RIGI oligomerized on viral RNAs, an essential step in the activation of the RIG-I signaling pathway. Through a ubiquitin-independent parallel mechanism, which consists in bridging RIGI filaments forming on longer viral RNAs, further activates the RIG-I signaling pathway. This second mechanism that synergizes with the ubiquitin-dependent one would thereby allow an RNA length-dependent regulation of the RIG-I signaling pathway. Associated with the E2 ligase UBE2N, also constitutively synthesizes unanchored 'Lys-63'-linked polyubiquitin chains that may also activate the RIG-I signaling pathway. This chain is E3 ubiquitin-protein ligase RNF135, found in Rattus norvegicus (Rat).